We begin with the raw amino-acid sequence, 470 residues long: Cysteine--tRNA ligase (470 aa).

A Zn(2+)-binding site is contributed by Cys28. Positions Pro30–Asn40 match the 'HIGH' region motif. Cys211, His236, and Glu240 together coordinate Zn(2+). Positions Lys270–Ser274 match the 'KMSKS' region motif. Lys273 lines the ATP pocket.

Belongs to the class-I aminoacyl-tRNA synthetase family. Monomer. Zn(2+) is required as a cofactor.

The protein localises to the cytoplasm. The catalysed reaction is tRNA(Cys) + L-cysteine + ATP = L-cysteinyl-tRNA(Cys) + AMP + diphosphate. The polypeptide is Cysteine--tRNA ligase (Enterococcus faecalis (strain ATCC 700802 / V583)).